The sequence spans 1033 residues: Probable LRR receptor-like serine/threonine-protein kinase At1g56140 (1033 aa).

Residues 1 to 28 (MLRLWRYLCLLLTVWFLCNFGPVYVVRA) form the signal peptide. Residues 29–636 (QNRTGATTHP…PSKGKSMTGT (608 aa)) are Extracellular-facing. N30, N60, and N94 each carry an N-linked (GlcNAc...) asparagine glycan. 13 LRR repeats span residues 97-121 (ICRITNIKVYAMEVVGSIPQQLWTL), 122-145 (EYLTNLNLGQNVLTGSLPPALGNL), 147-169 (RMRWMTFGINALSGPIPKEIGLL), 170-193 (TDLRLLSISSNNFSGSIPDEIGRC), 195-217 (KLQQIYIDSSGLSGGLPVSFANL), 241-264 (WTKLTTLRILGTGLSGPIPASFSN), 265-288 (LTSLTELRLGDISNGNSSLEFIKD), 289-313 (MKSLSILVLRNNNLTGTIPSNIGEY), 314-337 (SSLRQLDLSFNKLHGTIPASLFNL), 339-361 (QLTHLFLGNNTLNGSLPTQKGQS), 363-382 (SNVDVSYNDLSGSLPSWVSL), 383-406 (PNLNLNLVANNFTLEGLDNRVLSG), and 422-445 (IYSDFSINCGGPEIRSVTEAVFER). An N-linked (GlcNAc...) asparagine glycan is attached at N144. An N-linked (GlcNAc...) asparagine glycan is attached at N181. N-linked (GlcNAc...) asparagine glycosylation is found at N264, N280, and N301. 2 N-linked (GlcNAc...) asparagine glycosylation sites follow: N347 and N351. A glycan (N-linked (GlcNAc...) asparagine) is linked at N393. N579 carries N-linked (GlcNAc...) asparagine glycosylation. A helical membrane pass occupies residues 637-657 (IVGVIVGVGLLSIISGVVIFI). The Cytoplasmic segment spans residues 658-1033 (IRKRRKRYTD…MLGAQMNEGR (376 aa)). Phosphothreonine is present on T682. The Protein kinase domain maps to 693-951 (FDPSNKLGEG…LCTQTSHALR (259 aa)). ATP is bound by residues 699-707 (LGEGGFGPV) and K721. Phosphotyrosine is present on Y766. D817 (proton acceptor) is an active-site residue. S821 and S850 each carry phosphoserine. Residues T851 and T856 each carry the phosphothreonine modification. Y864 is modified (phosphotyrosine). Residues 1012 to 1033 (SEISPRNNDARPMLGAQMNEGR) are disordered.

This sequence belongs to the protein kinase superfamily. Ser/Thr protein kinase family.

The protein resides in the membrane. The catalysed reaction is L-seryl-[protein] + ATP = O-phospho-L-seryl-[protein] + ADP + H(+). The enzyme catalyses L-threonyl-[protein] + ATP = O-phospho-L-threonyl-[protein] + ADP + H(+). The protein is Probable LRR receptor-like serine/threonine-protein kinase At1g56140 of Arabidopsis thaliana (Mouse-ear cress).